Reading from the N-terminus, the 402-residue chain is Flavohemoprotein (402 aa).

A Globin domain is found at methionine 1–alanine 136. Histidine 85 contacts heme b. Catalysis depends on charge relay system residues tyrosine 95 and glutamate 135. A reductase region spans residues glycine 147 to glutamine 402. Positions lysine 150–asparagine 260 constitute an FAD-binding FR-type domain. FAD is bound by residues tyrosine 188 and arginine 204 to serine 207. Glycine 273–proline 278 is an NADP(+) binding site. Residue phenylalanine 394–proline 397 coordinates FAD.

It belongs to the globin family. Two-domain flavohemoproteins subfamily. In the C-terminal section; belongs to the flavoprotein pyridine nucleotide cytochrome reductase family. Requires heme b as cofactor. It depends on FAD as a cofactor.

The enzyme catalyses 2 nitric oxide + NADPH + 2 O2 = 2 nitrate + NADP(+) + H(+). It carries out the reaction 2 nitric oxide + NADH + 2 O2 = 2 nitrate + NAD(+) + H(+). In terms of biological role, is involved in NO detoxification in an aerobic process, termed nitric oxide dioxygenase (NOD) reaction that utilizes O(2) and NAD(P)H to convert NO to nitrate, which protects the bacterium from various noxious nitrogen compounds. Therefore, plays a central role in the inducible response to nitrosative stress. This is Flavohemoprotein from Bacillus cereus (strain ATCC 10987 / NRS 248).